Reading from the N-terminus, the 312-residue chain is Nucleosome assembly protein 1-like 4 (312 aa).

Positions 24 to 78 form a coiled coil; that stretch reads VETLKNKLQALAEQHVDVLESLAPSVRKRVDVLMEIQSQHDELEVKFFEEKAALE. The Nuclear export signal motif lies at 45-60; the sequence is LAPSVRKRVDVLMEIQ. The segment at 288–312 is disordered; it reads EDYGASWVDDEEEDDNDDEYSDEEA.

Belongs to the nucleosome assembly protein (NAP) family.

Its subcellular location is the nucleus. The protein resides in the cytoplasm. Its function is as follows. May modulate chromatin structure by regulation of nucleosome assembly/disassembly. In Oryza sativa subsp. indica (Rice), this protein is Nucleosome assembly protein 1-like 4.